The primary structure comprises 190 residues: Pyridoxal 5'-phosphate synthase subunit PdxT (190 aa).

46–48 lines the L-glutamine pocket; the sequence is GES. Cysteine 78 functions as the Nucleophile in the catalytic mechanism. L-glutamine-binding positions include arginine 106 and 135–136; that span reads IR. Catalysis depends on charge relay system residues histidine 171 and glutamate 173.

Belongs to the glutaminase PdxT/SNO family. In the presence of PdxS, forms a dodecamer of heterodimers. Only shows activity in the heterodimer.

The catalysed reaction is aldehydo-D-ribose 5-phosphate + D-glyceraldehyde 3-phosphate + L-glutamine = pyridoxal 5'-phosphate + L-glutamate + phosphate + 3 H2O + H(+). It carries out the reaction L-glutamine + H2O = L-glutamate + NH4(+). It functions in the pathway cofactor biosynthesis; pyridoxal 5'-phosphate biosynthesis. In terms of biological role, catalyzes the hydrolysis of glutamine to glutamate and ammonia as part of the biosynthesis of pyridoxal 5'-phosphate. The resulting ammonia molecule is channeled to the active site of PdxS. The sequence is that of Pyridoxal 5'-phosphate synthase subunit PdxT from Dictyoglomus turgidum (strain DSM 6724 / Z-1310).